The sequence spans 754 residues: 5-methyltetrahydropteroyltriglutamate--homocysteine methyltransferase (754 aa).

Residues 15–18 and lysine 114 contribute to the 5-methyltetrahydropteroyltri-L-glutamate site; that span reads RELK. L-homocysteine contacts are provided by residues 430 to 432 and glutamate 483; that span reads IGS. Residues 430–432 and glutamate 483 contribute to the L-methionine site; that span reads IGS. 5-methyltetrahydropteroyltri-L-glutamate contacts are provided by residues 514–515 and tryptophan 560; that span reads RC. Aspartate 598 is a binding site for L-homocysteine. Residue aspartate 598 coordinates L-methionine. A 5-methyltetrahydropteroyltri-L-glutamate-binding site is contributed by glutamate 604. Zn(2+) contacts are provided by histidine 641, cysteine 643, and glutamate 665. Histidine 694 serves as the catalytic Proton donor. Position 726 (cysteine 726) interacts with Zn(2+).

The protein belongs to the vitamin-B12 independent methionine synthase family. Zn(2+) is required as a cofactor.

It carries out the reaction 5-methyltetrahydropteroyltri-L-glutamate + L-homocysteine = tetrahydropteroyltri-L-glutamate + L-methionine. It participates in amino-acid biosynthesis; L-methionine biosynthesis via de novo pathway; L-methionine from L-homocysteine (MetE route): step 1/1. Catalyzes the transfer of a methyl group from 5-methyltetrahydrofolate to homocysteine resulting in methionine formation. The chain is 5-methyltetrahydropteroyltriglutamate--homocysteine methyltransferase from Campylobacter jejuni subsp. jejuni serotype O:6 (strain 81116 / NCTC 11828).